An 810-amino-acid polypeptide reads, in one-letter code: F-BAR domain only protein 2 (810 aa).

Residues 3-250 form the F-BAR domain; the sequence is MAYFVENFWG…NMANTTVESL (248 aa). The segment at 3–274 is mediates dimerization and binding to membranes enriched in Pi(4,5)-P2 and induces their tubulation; it reads MAYFVENFWG…PGLIEFEECD (272 aa). A coiled-coil region spans residues 87–156; the sequence is HLDLVRKLQE…CVEQERLKKE (70 aa). Lys-297 participates in a covalent cross-link: Glycyl lysine isopeptide (Lys-Gly) (interchain with G-Cter in SUMO2). Residues 301–352 form a disordered region; the sequence is DAESVECPDADSLNIPDVDEEGYSIKPETNQNDTKENHFYSSSDSDSEDEEP. Ser-312 is subject to Phosphoserine. Thr-385 carries the post-translational modification Phosphothreonine. Ser-387, Ser-394, and Ser-403 each carry phosphoserine. Positions 403–537 are disordered; it reads SNEELTKSKP…VSRGPSPVSL (135 aa). A compositionally biased stretch (low complexity) spans 433–456; sequence PSLDSSSSSSLTSSSSARPTTPLS. 7 positions are modified to phosphoserine: Ser-488, Ser-493, Ser-496, Ser-508, Ser-510, Ser-511, and Ser-533. Over residues 502-521 the composition is skewed to low complexity; that stretch reads PLARAESSSSISSSASLSAA. A mediates interaction with DAB2, EPS15, EPS15R and ITSN1 region spans residues 521 to 810; that stretch reads ANTPTVGVSR…FATGRYLADC (290 aa). Positions 542–809 constitute an MHD domain; it reads TLPVAVALTE…RFATGRYLAD (268 aa).

It belongs to the FCHO family. In terms of assembly, homodimer; disulfide-linked. May form homotetramer. Interacts with AP2A1. Interacts with EPS15, EPS15R, ITSN1 and ITSN2; recruit those scaffolding proteins which in turn may interact with the adaptor protein complex AP-2 at the plasma membrane. Interacts with DAB2 (via DPF motifs); mediates LDL receptor/LDLR endocytosis. In terms of processing, ubiquitinated. Mainly undergoes monoubiquitination but also polyubiquitination.

The protein localises to the membrane. The protein resides in the clathrin-coated pit. In terms of biological role, functions in an early step of clathrin-mediated endocytosis. Has both a membrane binding/bending activity and the ability to recruit proteins essential to the formation of functional clathrin-coated pits. Has a lipid-binding activity with a preference for membranes enriched in phosphatidylserine and phosphoinositides (Pi(4,5) biphosphate) like the plasma membrane. Its membrane-bending activity might be important for the subsequent action of clathrin and adaptors in the formation of clathrin-coated vesicles. Involved in adaptor protein complex AP-2-dependent endocytosis of the transferrin receptor, it also functions in the AP-2-independent endocytosis of the LDL receptor. In Pongo abelii (Sumatran orangutan), this protein is F-BAR domain only protein 2 (FCHO2).